Here is a 586-residue protein sequence, read N- to C-terminus: DNA-directed RNA polymerase subunit beta' (586 aa).

Zn(2+) contacts are provided by Cys64, Cys66, Cys85, and Cys88. Residues Asp448, Asp450, and Asp452 each coordinate Mg(2+).

Belongs to the RNA polymerase beta' chain family. RpoC1 subfamily. As to quaternary structure, in plastids the minimal PEP RNA polymerase catalytic core is composed of four subunits: alpha, beta, beta', and beta''. When a (nuclear-encoded) sigma factor is associated with the core the holoenzyme is formed, which can initiate transcription. Requires Mg(2+) as cofactor. The cofactor is Zn(2+).

The protein localises to the plastid. It localises to the chloroplast. It carries out the reaction RNA(n) + a ribonucleoside 5'-triphosphate = RNA(n+1) + diphosphate. Functionally, DNA-dependent RNA polymerase catalyzes the transcription of DNA into RNA using the four ribonucleoside triphosphates as substrates. The protein is DNA-directed RNA polymerase subunit beta' of Euglena gracilis.